The chain runs to 83 residues: Small proline-rich protein 2A3 (83 aa).

Tandem repeats lie at residues Pro-21–Pro-29, Gln-30–Pro-38, Val-39–Pro-47, Ser-48–Pro-56, and Val-57–Pro-65. Residues Pro-21–Pro-65 form a 5 X 9 AA approximate tandem repeats region.

This sequence belongs to the cornifin (SPRR) family. In terms of processing, forms five pairs of intrachain disulfide bonds.

Its subcellular location is the secreted. The protein localises to the extracellular space. The protein resides in the cytoplasmic vesicle. It localises to the secretory vesicle. Functionally, gut bactericidal protein that selectively kills Gram-positive bacteria by binding to negatively charged lipids on bacterial membranes, leading to bacterial membrane permeabilization and disruption. Specifically binds lipids bearing negatively charged headgroups, such as phosphatidic acid, phosphatidylserine (PS), cardiolipin (CL), and phosphatidylinositol phosphates, but not to zwitterionic or neutral lipids. Induced by type-2 cytokines in response to helminth infection and is required to protect against helminth-induced bacterial invasion of intestinal tissue. May also be involved in the development of the cornified envelope of squamous epithelia; however, additional evidences are required to confirm this result in vivo. This Mus musculus (Mouse) protein is Small proline-rich protein 2A3.